A 190-amino-acid chain; its full sequence is Putative manganese efflux pump MntP (190 aa).

Transmembrane regions (helical) follow at residues 3–23, 41–61, 69–89, 105–125, 133–153, and 168–188; these read PISL…AALG, LIFG…GQVA, DHWI…YNGI, FWIL…VGVG, IVVA…IGVM, and IIGG…HLSA.

This sequence belongs to the MntP (TC 9.B.29) family.

It is found in the cell inner membrane. Probably functions as a manganese efflux pump. This chain is Putative manganese efflux pump MntP, found in Pseudomonas syringae pv. syringae (strain B728a).